The primary structure comprises 265 residues: GTP cyclohydrolase FolE2 (265 aa).

It belongs to the GTP cyclohydrolase IV family.

The enzyme catalyses GTP + H2O = 7,8-dihydroneopterin 3'-triphosphate + formate + H(+). Its pathway is cofactor biosynthesis; 7,8-dihydroneopterin triphosphate biosynthesis; 7,8-dihydroneopterin triphosphate from GTP: step 1/1. Functionally, converts GTP to 7,8-dihydroneopterin triphosphate. The chain is GTP cyclohydrolase FolE2 from Bordetella petrii (strain ATCC BAA-461 / DSM 12804 / CCUG 43448).